Consider the following 426-residue polypeptide: Serine--tRNA ligase (426 aa).

231–233 (TAE) serves as a coordination point for L-serine. ATP is bound by residues 262–264 (RRE) and Val-278. L-serine is bound at residue Glu-285. 349-352 (EVSS) is an ATP binding site. Ser-384 provides a ligand contact to L-serine.

This sequence belongs to the class-II aminoacyl-tRNA synthetase family. Type-1 seryl-tRNA synthetase subfamily. Homodimer. The tRNA molecule binds across the dimer.

It is found in the cytoplasm. It carries out the reaction tRNA(Ser) + L-serine + ATP = L-seryl-tRNA(Ser) + AMP + diphosphate + H(+). It catalyses the reaction tRNA(Sec) + L-serine + ATP = L-seryl-tRNA(Sec) + AMP + diphosphate + H(+). The protein operates within aminoacyl-tRNA biosynthesis; selenocysteinyl-tRNA(Sec) biosynthesis; L-seryl-tRNA(Sec) from L-serine and tRNA(Sec): step 1/1. In terms of biological role, catalyzes the attachment of serine to tRNA(Ser). Is also able to aminoacylate tRNA(Sec) with serine, to form the misacylated tRNA L-seryl-tRNA(Sec), which will be further converted into selenocysteinyl-tRNA(Sec). The sequence is that of Serine--tRNA ligase from Chlamydia caviae (strain ATCC VR-813 / DSM 19441 / 03DC25 / GPIC) (Chlamydophila caviae).